Here is a 172-residue protein sequence, read N- to C-terminus: Protein-export protein SecB (172 aa).

Belongs to the SecB family. Homotetramer, a dimer of dimers. One homotetramer interacts with 1 SecA dimer.

It is found in the cytoplasm. Functionally, one of the proteins required for the normal export of preproteins out of the cell cytoplasm. It is a molecular chaperone that binds to a subset of precursor proteins, maintaining them in a translocation-competent state. It also specifically binds to its receptor SecA. The chain is Protein-export protein SecB from Haemophilus ducreyi (strain 35000HP / ATCC 700724).